A 100-amino-acid chain; its full sequence is uncharacterized protein (100 aa).

The helical transmembrane segment at 68 to 88 (VFLFFFTGSSPSFPAALLGLF) threads the bilayer.

It is found in the membrane. This is an uncharacterized protein from Saccharomyces cerevisiae (strain ATCC 204508 / S288c) (Baker's yeast).